We begin with the raw amino-acid sequence, 143 residues long: Auxin-responsive protein SAUR67 (143 aa).

This sequence belongs to the ARG7 family.

Its subcellular location is the cell membrane. In terms of biological role, may promote auxin-stimulated organ elongation, such as hypocotyls, stamen filaments and petals. The protein is Auxin-responsive protein SAUR67 of Arabidopsis thaliana (Mouse-ear cress).